A 335-amino-acid chain; its full sequence is tRNA N6-adenosine threonylcarbamoyltransferase (335 aa).

Fe cation contacts are provided by histidine 111 and histidine 115. Substrate is bound by residues 133-137 (LISGG), aspartate 166, glycine 179, and asparagine 276. Aspartate 301 is a Fe cation binding site.

This sequence belongs to the KAE1 / TsaD family. It depends on Fe(2+) as a cofactor.

It localises to the cytoplasm. The enzyme catalyses L-threonylcarbamoyladenylate + adenosine(37) in tRNA = N(6)-L-threonylcarbamoyladenosine(37) in tRNA + AMP + H(+). Required for the formation of a threonylcarbamoyl group on adenosine at position 37 (t(6)A37) in tRNAs that read codons beginning with adenine. Is involved in the transfer of the threonylcarbamoyl moiety of threonylcarbamoyl-AMP (TC-AMP) to the N6 group of A37, together with TsaE and TsaB. TsaD likely plays a direct catalytic role in this reaction. The chain is tRNA N6-adenosine threonylcarbamoyltransferase from Wolbachia sp. subsp. Drosophila simulans (strain wRi).